The sequence spans 77 residues: U8-lycotoxin-Ls1t (77 aa).

The first 20 residues, 1-20, serve as a signal peptide directing secretion; it reads MKLIIFTGLVPFAIVSLIEA. Residues 21-26 constitute a propeptide that is removed on maturation; the sequence is QAENEK.

It belongs to the neurotoxin 19 (CSTX) family. 08 (U8-Lctx) subfamily. Post-translationally, contains 4 disulfide bonds. Expressed by the venom gland.

It is found in the secreted. The sequence is that of U8-lycotoxin-Ls1t from Lycosa singoriensis (Wolf spider).